The chain runs to 358 residues: Aromatic amino acid aminotransferase (358 aa).

Lys-214 carries the N6-(pyridoxal phosphate)lysine modification.

It belongs to the class-II pyridoxal-phosphate-dependent aminotransferase family. In terms of assembly, homodimer. Requires pyridoxal 5'-phosphate as cofactor.

The enzyme catalyses an aromatic L-alpha-amino acid + 2-oxoglutarate = an aromatic oxo-acid + L-glutamate. Aminotransferase that catalyzes the conversion of aromatic amino acids and 2-oxoglutarate into corresponding aromatic oxo acids and L-glutamate. This Rhodococcus opacus (strain B4) protein is Aromatic amino acid aminotransferase.